The following is a 57-amino-acid chain: UPF0391 membrane protein RHECIAT_CH0003936 (57 aa).

The next 2 helical transmembrane spans lie at Trp-4–Ser-24 and Val-33–Gly-53.

This sequence belongs to the UPF0391 family.

It localises to the cell membrane. The sequence is that of UPF0391 membrane protein RHECIAT_CH0003936 from Rhizobium etli (strain CIAT 652).